The sequence spans 455 residues: Ammonium transporter Rh type B (455 aa).

Over 1 to 10 (MARIPRHRRL) the chain is Cytoplasmic. Residues 11 to 31 (VLPLLCLLFQGATSLLFAIFV) traverse the membrane as a helical segment. Topologically, residues 32–58 (RYNHETDAALWHWGNHSNVDNEFYFRY) are extracellular. An N-linked (GlcNAc...) asparagine glycan is attached at N46. Residues 59 to 79 (PSFQDVHVMVFVGFGFLMVFL) traverse the membrane as a helical segment. At 80–83 (QRYG) the chain is on the cytoplasmic side. Residues 84–104 (FSSVGFTFLVATFTLQWATLL) form a helical membrane-spanning segment. Residues 105 to 121 (QGFLHSFHGGHIHIGVE) lie on the Extracellular side of the membrane. The helical transmembrane segment at 122–142 (SLINADFCAGAVLISFGAVLG) threads the bilayer. Residues 143–148 (KTGPAQ) lie on the Cytoplasmic side of the membrane. The chain crosses the membrane as a helical span at residues 149-169 (LLLMALLEAVLFSVNEFILLS). Residues 170–176 (LLGVRDA) lie on the Extracellular side of the membrane. A helical membrane pass occupies residues 177–197 (GGSMTIHTFGAYFGLFLSRVL). Residues 198-216 (YRSQLEKSRHRQTSVYNSD) are Cytoplasmic-facing. The helical transmembrane segment at 217–237 (LFAMIGTIFLWVFWPSFNSAP) threads the bilayer. The Extracellular segment spans residues 238–247 (TALGDGQHRT). Residues 248–270 (VVNTYYSLTASTLSTFALSALVS) traverse the membrane as a helical segment. The Cytoplasmic portion of the chain corresponds to 271-274 (GDGR). The helical transmembrane segment at 275–295 (LDMVHIQNAALAGGVVVGTAS) threads the bilayer. Position 296 (E296) is a topological domain, extracellular. The helical transmembrane segment at 297–317 (MMLTPFGALAAGFLAGTVSTL) threads the bilayer. At 318–340 (GYKFFTPILESRFKLQDTCGVHN) the chain is on the cytoplasmic side. A helical transmembrane segment spans residues 341–361 (LHGMPGLLGAILGVLVAALAT). Residues 362–390 (HEAYGDGLQTVFPLIAKGQRSATSQAMYQ) are Extracellular-facing. Residues 391–411 (LFGMFVTLVFASVGGSLGGLL) traverse the membrane as a helical segment. Over 412–455 (LKLPFLDSPPDSQCFEDQVYWEVPGEQEAETQRPLRTEEPDTQA) the chain is Cytoplasmic. The interval 413–421 (KLPFLDSPP) is interaction with ANK3.

This sequence belongs to the ammonium transporter (TC 2.A.49) family. Rh subfamily. As to quaternary structure, interacts (via C-terminus) with ANK2 and ANK3; required for targeting to the basolateral membrane. N-glycosylated. In terms of tissue distribution, expressed in kidney by connecting segments and collecting tubules (at protein level).

It localises to the basolateral cell membrane. Its subcellular location is the cytoplasmic vesicle membrane. The enzyme catalyses NH4(+)(in) = NH4(+)(out). It catalyses the reaction methylamine(out) = methylamine(in). The catalysed reaction is CO2(out) = CO2(in). Its function is as follows. Ammonium transporter involved in the maintenance of acid-base homeostasis. Transports ammonium and its related derivative methylammonium across the basolateral plasma membrane of epithelial cells likely contributing to renal transepithelial ammonia transport and ammonia metabolism. May transport either NH4(+) or NH3 ammonia species predominantly mediating an electrogenic NH4(+) transport. May act as a CO2 channel providing for renal acid secretion. The protein is Ammonium transporter Rh type B (Rhbg) of Rattus norvegicus (Rat).